A 101-amino-acid polypeptide reads, in one-letter code: Putative pterin-4-alpha-carbinolamine dehydratase (101 aa).

It belongs to the pterin-4-alpha-carbinolamine dehydratase family.

The enzyme catalyses (4aS,6R)-4a-hydroxy-L-erythro-5,6,7,8-tetrahydrobiopterin = (6R)-L-erythro-6,7-dihydrobiopterin + H2O. In Rhizobium leguminosarum bv. trifolii (strain WSM2304), this protein is Putative pterin-4-alpha-carbinolamine dehydratase.